A 345-amino-acid polypeptide reads, in one-letter code: Phosphoribosylformylglycinamidine cyclo-ligase (345 aa).

The protein belongs to the AIR synthase family.

The protein localises to the cytoplasm. It catalyses the reaction 2-formamido-N(1)-(5-O-phospho-beta-D-ribosyl)acetamidine + ATP = 5-amino-1-(5-phospho-beta-D-ribosyl)imidazole + ADP + phosphate + H(+). It functions in the pathway purine metabolism; IMP biosynthesis via de novo pathway; 5-amino-1-(5-phospho-D-ribosyl)imidazole from N(2)-formyl-N(1)-(5-phospho-D-ribosyl)glycinamide: step 2/2. The polypeptide is Phosphoribosylformylglycinamidine cyclo-ligase (Escherichia coli O6:K15:H31 (strain 536 / UPEC)).